We begin with the raw amino-acid sequence, 224 residues long: MPFLFVSGTGTGVGKTFSTAVLVRYLADQGHDVLPVKLVQTGELPGEGDIFNIERLTGIAGEEFARFKDPLAPNLAARREGVEPIQFDQIISWLRGFDDPDRIIVVEGAGGLLVRLGEDFTLADVASALNAPLVIVTSTGLGSLNAAELSVEAANRRGLTVLGVLGGSIPQNPDLATMLNLEEFERVTGVPFWGALPEGLSRVEGFVEKQSFPALDAFKKPPAR.

12-17 serves as a coordination point for ATP; that stretch reads GVGKTF. Threonine 16 serves as a coordination point for Mg(2+). Lysine 37 is a catalytic residue. Threonine 41 is a substrate binding site. ATP contacts are provided by residues asparagine 52, 107-110, 167-168, 197-199, and glutamate 204; these read EGAG, GS, and PEG. 2 residues coordinate Mg(2+): asparagine 52 and glutamate 107.

The protein belongs to the dethiobiotin synthetase family. Homodimer. It depends on Mg(2+) as a cofactor.

It localises to the cytoplasm. The catalysed reaction is (7R,8S)-7,8-diammoniononanoate + CO2 + ATP = (4R,5S)-dethiobiotin + ADP + phosphate + 3 H(+). It functions in the pathway cofactor biosynthesis; biotin biosynthesis; biotin from 7,8-diaminononanoate: step 1/2. Catalyzes a mechanistically unusual reaction, the ATP-dependent insertion of CO2 between the N7 and N8 nitrogen atoms of 7,8-diaminopelargonic acid (DAPA, also called 7,8-diammoniononanoate) to form a ureido ring. The protein is ATP-dependent dethiobiotin synthetase BioD of Corynebacterium glutamicum (strain ATCC 13032 / DSM 20300 / JCM 1318 / BCRC 11384 / CCUG 27702 / LMG 3730 / NBRC 12168 / NCIMB 10025 / NRRL B-2784 / 534).